The sequence spans 590 residues: Membrane protein insertase YidC (590 aa).

5 helical membrane-spanning segments follow: residues 5 to 25 (SVIG…FMKP), 368 to 388 (GLII…LSLA), 433 to 453 (LGGC…FYVF), 483 to 503 (LPLY…TVFF), and 519 to 539 (IMMW…PAGL).

It belongs to the OXA1/ALB3/YidC family. Type 1 subfamily. Interacts with the Sec translocase complex via SecD. Specifically interacts with transmembrane segments of nascent integral membrane proteins during membrane integration.

The protein localises to the cell inner membrane. Required for the insertion and/or proper folding and/or complex formation of integral membrane proteins into the membrane. Involved in integration of membrane proteins that insert both dependently and independently of the Sec translocase complex, as well as at least some lipoproteins. Aids folding of multispanning membrane proteins. The protein is Membrane protein insertase YidC of Chlorobaculum tepidum (strain ATCC 49652 / DSM 12025 / NBRC 103806 / TLS) (Chlorobium tepidum).